Here is a 93-residue protein sequence, read N- to C-terminus: Pyrimidine/purine nucleoside phosphorylase (93 aa).

The protein belongs to the nucleoside phosphorylase PpnP family.

It carries out the reaction a purine D-ribonucleoside + phosphate = a purine nucleobase + alpha-D-ribose 1-phosphate. The catalysed reaction is adenosine + phosphate = alpha-D-ribose 1-phosphate + adenine. It catalyses the reaction cytidine + phosphate = cytosine + alpha-D-ribose 1-phosphate. The enzyme catalyses guanosine + phosphate = alpha-D-ribose 1-phosphate + guanine. It carries out the reaction inosine + phosphate = alpha-D-ribose 1-phosphate + hypoxanthine. The catalysed reaction is thymidine + phosphate = 2-deoxy-alpha-D-ribose 1-phosphate + thymine. It catalyses the reaction uridine + phosphate = alpha-D-ribose 1-phosphate + uracil. The enzyme catalyses xanthosine + phosphate = alpha-D-ribose 1-phosphate + xanthine. Functionally, catalyzes the phosphorolysis of diverse nucleosides, yielding D-ribose 1-phosphate and the respective free bases. Can use uridine, adenosine, guanosine, cytidine, thymidine, inosine and xanthosine as substrates. Also catalyzes the reverse reactions. In Tolumonas auensis (strain DSM 9187 / NBRC 110442 / TA 4), this protein is Pyrimidine/purine nucleoside phosphorylase.